The sequence spans 203 residues: RNA annealing protein YRA2 (203 aa).

Position 1 is an N-acetylmethionine (Met1). Disordered regions lie at residues Met1 to Pro60 and Glu134 to Gly203. Positions Asn11–His20 are enriched in polar residues. Residues Ser47 to Pro60 show a composition bias toward basic and acidic residues. The RRM domain maps to Lys64 to Pro138. Basic residues-rich tracts occupy residues Gln139–Gln153 and Pro163–Gly180.

The protein belongs to the YRA1 family. As to quaternary structure, associates with mRNPs. Interacts with YRA1.

The protein localises to the nucleus. Involved in export of poly(A) mRNAs from the nucleus. Recruited to the coding sequences as well as poly-A sites of active genes. In Saccharomyces cerevisiae (strain RM11-1a) (Baker's yeast), this protein is RNA annealing protein YRA2 (YRA2).